The primary structure comprises 145 residues: D-aminoacyl-tRNA deacylase (145 aa).

Residues 137 to 138 (GP) carry the Gly-cisPro motif, important for rejection of L-amino acids motif.

The protein belongs to the DTD family. As to quaternary structure, homodimer.

It localises to the cytoplasm. It carries out the reaction glycyl-tRNA(Ala) + H2O = tRNA(Ala) + glycine + H(+). It catalyses the reaction a D-aminoacyl-tRNA + H2O = a tRNA + a D-alpha-amino acid + H(+). Its function is as follows. An aminoacyl-tRNA editing enzyme that deacylates mischarged D-aminoacyl-tRNAs. Also deacylates mischarged glycyl-tRNA(Ala), protecting cells against glycine mischarging by AlaRS. Acts via tRNA-based rather than protein-based catalysis; rejects L-amino acids rather than detecting D-amino acids in the active site. By recycling D-aminoacyl-tRNA to D-amino acids and free tRNA molecules, this enzyme counteracts the toxicity associated with the formation of D-aminoacyl-tRNA entities in vivo and helps enforce protein L-homochirality. The polypeptide is D-aminoacyl-tRNA deacylase (Francisella tularensis subsp. novicida (strain U112)).